We begin with the raw amino-acid sequence, 156 residues long: Small ribosomal subunit protein uS7 (156 aa).

It belongs to the universal ribosomal protein uS7 family. In terms of assembly, part of the 30S ribosomal subunit. Contacts proteins S9 and S11.

One of the primary rRNA binding proteins, it binds directly to 16S rRNA where it nucleates assembly of the head domain of the 30S subunit. Is located at the subunit interface close to the decoding center, probably blocks exit of the E-site tRNA. This is Small ribosomal subunit protein uS7 from Vibrio cholerae serotype O1 (strain ATCC 39315 / El Tor Inaba N16961).